The primary structure comprises 302 residues: (2S)-3-sulfopropanediol sulfolyase activating enzyme (302 aa).

Residues 19-301 (HDGEGIRTLV…RLNIMLKSYE (283 aa)) form the Radical SAM core domain. Residues cysteine 33, cysteine 37, cysteine 40, cysteine 59, cysteine 65, cysteine 68, cysteine 72, cysteine 91, cysteine 94, cysteine 97, and cysteine 101 each coordinate [4Fe-4S] cluster. 39–41 (WCS) contacts S-adenosyl-L-methionine. 4Fe-4S ferredoxin-type domains follow at residues 50–81 (PERAYNPTRCLTAAVCGRCAKACPTGAVSIVG) and 82–111 (GLVCFDRSKCTGCNACVRACPSGAQTVYGE). Residues glycine 141 and 190 to 192 (DIK) contribute to the S-adenosyl-L-methionine site.

It belongs to the organic radical-activating enzymes family. Requires [4Fe-4S] cluster as cofactor.

The catalysed reaction is glycyl-[protein] + reduced [flavodoxin] + S-adenosyl-L-methionine = glycin-2-yl radical-[protein] + semiquinone [flavodoxin] + 5'-deoxyadenosine + L-methionine + H(+). It participates in organosulfur degradation; alkanesulfonate degradation. Involved in the degradation of the organosulfur compound 2(S)-dihydroxypropanesulfonate (DHPS). Catalyzes activation of the (2S)-3-sulfopropanediol sulfolyase HpsG under anaerobic conditions by generation of an organic free radical on a glycine residue. The polypeptide is (2S)-3-sulfopropanediol sulfolyase activating enzyme (Bilophila wadsworthia (strain 3_1_6)).